Here is a 309-residue protein sequence, read N- to C-terminus: Porphobilinogen deaminase (309 aa).

Cys-241 carries the S-(dipyrrolylmethanemethyl)cysteine modification.

Belongs to the HMBS family. Monomer. Dipyrromethane serves as cofactor.

It catalyses the reaction 4 porphobilinogen + H2O = hydroxymethylbilane + 4 NH4(+). Its pathway is porphyrin-containing compound metabolism; protoporphyrin-IX biosynthesis; coproporphyrinogen-III from 5-aminolevulinate: step 2/4. Tetrapolymerization of the monopyrrole PBG into the hydroxymethylbilane pre-uroporphyrinogen in several discrete steps. The sequence is that of Porphobilinogen deaminase from Desulforamulus reducens (strain ATCC BAA-1160 / DSM 100696 / MI-1) (Desulfotomaculum reducens).